The following is a 259-amino-acid chain: Complement factor D (259 aa).

The signal sequence occupies residues 1–21 (MADRSGHLAALILLGAAVCVA). The propeptide at 22–26 (QPRGR) is activation peptide. Positions 27–254 (ILGGQEAKSH…YVAWIDGVMA (228 aa)) constitute a Peptidase S1 domain. C52 and C68 are oxidised to a cystine. Residues H67 and D115 each act as charge relay system in the active site. 3 disulfides stabilise this stretch: C149–C215, C180–C196, and C205–C230. The Charge relay system role is filled by S209. A self-inhibitor loop region spans residues 224 to 228 (TSGSR).

This sequence belongs to the peptidase S1 family. In terms of processing, CFD is activated by the removal of 5 residues at the N-terminus, named activation peptide, by the MASP-3 isoform of MASP1.

Its subcellular location is the secreted. The catalysed reaction is Selective cleavage of Arg-|-Lys bond in complement factor B when in complex with complement subcomponent C3b or with cobra venom factor.. With respect to regulation, circulates in plasma in a mature but self-inhibited form. Activated by factor B (CFB), which displaces the self-inhibition loop. Associates with CFB complexed with complement C3b. Its function is as follows. Serine protease that initiates the alternative pathway of the complement system, a cascade of proteins that leads to phagocytosis and breakdown of pathogens and signaling that strengthens the adaptive immune system. In contrast to other complement pathways (classical, lectin and GZMK) that are directly activated by pathogens or antigen-antibody complexes, the alternative complement pathway is initiated by the spontaneous hydrolysis of complement C3. The alternative complement pathway acts as an amplification loop that enhances complement activation by mediating the formation of C3 and C5 convertases. Activated CFD cleaves factor B (CFB) when the latter is complexed with complement C3b, activating the C3 convertase of the alternative pathway. This is Complement factor D (CFD) from Sus scrofa (Pig).